The sequence spans 142 residues: Ribosome-binding factor A (142 aa).

The interval Glu119 to Thr142 is disordered. A compositionally biased stretch (polar residues) spans Glu123–Thr142.

Belongs to the RbfA family. As to quaternary structure, monomer. Binds 30S ribosomal subunits, but not 50S ribosomal subunits or 70S ribosomes.

Its subcellular location is the cytoplasm. In terms of biological role, one of several proteins that assist in the late maturation steps of the functional core of the 30S ribosomal subunit. Associates with free 30S ribosomal subunits (but not with 30S subunits that are part of 70S ribosomes or polysomes). Required for efficient processing of 16S rRNA. May interact with the 5'-terminal helix region of 16S rRNA. This Prochlorococcus marinus (strain MIT 9303) protein is Ribosome-binding factor A.